A 580-amino-acid chain; its full sequence is Multidrug resistance-like ATP-binding protein MdlB (580 aa).

In terms of domain architecture, ABC transmembrane type-1 spans 25–310 (LILAFIFLLS…ITIQQSVLQQ (286 aa)). Helical transmembrane passes span 26–46 (ILAF…PILI), 61–81 (LLII…SVFL), 150–170 (IILI…MALV), 173–193 (FILP…TPLL), 247–267 (LDGF…LCNF), and 268–288 (MFLF…YAFI). Positions 341–575 (INIQNVSFYH…KSCYYKMYKF (235 aa)) constitute an ABC transporter domain. 375–382 (GHTGSGKS) provides a ligand contact to ATP.

The protein belongs to the ABC transporter superfamily. Drug exporter-2 (TC 3.A.1.117) family.

It localises to the cell membrane. The enzyme catalyses ATP + H2O + xenobioticSide 1 = ADP + phosphate + xenobioticSide 2.. The sequence is that of Multidrug resistance-like ATP-binding protein MdlB (mdlB) from Buchnera aphidicola subsp. Acyrthosiphon pisum (strain APS) (Acyrthosiphon pisum symbiotic bacterium).